The sequence spans 59 residues: Venom protein 27.7 (59 aa).

The signal sequence occupies residues 1-29; that stretch reads MTFITLTIGLSLRTIFLIFIFLPPPHLLA.

It belongs to the non-disulfide-bridged peptide (NDBP) superfamily. In terms of tissue distribution, expressed by the venom gland.

Its subcellular location is the secreted. This Lychas mucronatus (Chinese swimming scorpion) protein is Venom protein 27.7.